Here is a 35-residue protein sequence, read N- to C-terminus: Dolichyl-diphosphooligosaccharide--protein glycosyltransferase subunit 4C (35 aa).

Residues 1–8 (MFDDQDLG) lie on the Lumenal side of the membrane. Residues 9-29 (FFANFLGIFIFILVIAYHFVM) traverse the membrane as a helical segment. The Cytoplasmic portion of the chain corresponds to 30–35 (ADPKFE).

Belongs to the OST4 family. As to quaternary structure, component of the oligosaccharyltransferase (OST) complex.

Its subcellular location is the endoplasmic reticulum membrane. Functionally, subunit of the oligosaccharyl transferase (OST) complex that catalyzes the initial transfer of a defined glycan (Glc(3)Man(9)GlcNAc(2) in eukaryotes) from the lipid carrier dolichol-pyrophosphate to an asparagine residue within an Asn-X-Ser/Thr consensus motif in nascent polypeptide chains, the first step in protein N-glycosylation. N-glycosylation occurs cotranslationally and the complex associates with the Sec61 complex at the channel-forming translocon complex that mediates protein translocation across the endoplasmic reticulum (ER). All subunits are required for a maximal enzyme activity. The chain is Dolichyl-diphosphooligosaccharide--protein glycosyltransferase subunit 4C (OST4C) from Arabidopsis thaliana (Mouse-ear cress).